Reading from the N-terminus, the 146-residue chain is Snaclec mucetin subunit beta (146 aa).

The first 23 residues, 1–23, serve as a signal peptide directing secretion; that stretch reads MGRFIFVSFGLLVVFISLSGTEA. Cystine bridges form between cysteine 27/cysteine 38, cysteine 55/cysteine 144, and cysteine 121/cysteine 136. Residues 34-145 form the C-type lectin domain; it reads YDEHCYQVFQ…CSSKRYVVCK (112 aa).

It belongs to the snaclec family. In terms of assembly, dimer and tetramer of heterodimers of alpha and beta subunits ((alphabeta)(2) and (alphabeta)(4)); disulfide-linked. These two multimeric forms are found. The complex is glycosylated. As to expression, expressed by the venom gland.

It is found in the secreted. Potent platelet activator that acts via GPIb (GP1BA/GP1BB). After activation by the toxin, the receptor is redistributed on platelet surface thanks to cytoskeletal translocation. The indirect activation of integrin alpha-IIb/beta-3 (ITGA2B/ITGB3) also induced by the toxin is downstream the cytoskeletal translocation of GPIb. The polypeptide is Snaclec mucetin subunit beta (Protobothrops mucrosquamatus (Taiwan habu)).